Here is a 323-residue protein sequence, read N- to C-terminus: Olfactory receptor 5P58 (323 aa).

At 1–28 (MAFLEDGNHTAVTEFILVGLTDDPVLKV) the chain is on the extracellular side. Asn8 is a glycosylation site (N-linked (GlcNAc...) asparagine). A helical transmembrane segment spans residues 29–49 (ILFTIILCIYLVTVSGNLSTI). At 50–57 (LLIRVSSQ) the chain is on the cytoplasmic side. The helical transmembrane segment at 58–78 (LHHPMYFFLSHLASVDLGYSS) threads the bilayer. The Extracellular segment spans residues 79-102 (SVTPNMLINFLAENNTISYIGCSI). Asn92 carries an N-linked (GlcNAc...) asparagine glycan. The cysteines at positions 100 and 192 are disulfide-linked. Residues 103 to 123 (QFGSATFFGVLECFLLAVMAY) form a helical membrane-spanning segment. The Cytoplasmic segment spans residues 124–136 (DRFVAICNPLLYS). The helical transmembrane segment at 137–157 (IKMSTQVCVKLVVGSYIGSSL) threads the bilayer. The Extracellular segment spans residues 158–199 (NASFVTVSIFNLLFCGPNKINHFFCDFDPLIELSCSDVSVPV). A helical membrane pass occupies residues 200–220 (AVTSCSAGLITMITVFVIAVS). At 221 to 240 (YTYILITVLKMRSTEGRHKA) the chain is on the cytoplasmic side. A helical membrane pass occupies residues 241 to 261 (FSTCTSHLTAVTLFYGTVTFI). At 262 to 274 (YVMPKSNYSTDQN) the chain is on the extracellular side. Asn268 carries an N-linked (GlcNAc...) asparagine glycan. The helical transmembrane segment at 275-295 (KVVSVFYMVVIPMLNPLIYSL) threads the bilayer. The Cytoplasmic segment spans residues 296-323 (RNNEIKGALKRQLGKKIFSQSNILFCKS).

This sequence belongs to the G-protein coupled receptor 1 family.

It is found in the cell membrane. Functionally, potential odorant receptor. This chain is Olfactory receptor 5P58, found in Mus musculus (Mouse).